Here is a 492-residue protein sequence, read N- to C-terminus: MSDLTKLTLAGARDALKKKEITSTELTGAYLKEMEAAAALNAYVTVTADKAMEMAKASDAKLAKGEGGALEGLPLGIKDLYCTKDVLTTACSHILDGFKPAYESTVTSNLWRDGAVMLGKLNNDEFAMGSSNETSHYGSVVNPWRRKGSDAKLVPGGSSGGSSAAVAANLCLAATATDTGGSIRQPAAFTGTVGLKPTYGRCSRWGIVAFASSLDQAGPIGRDVRDTAIMLGSMAGHDEKDTTSVDRAVPDYEAVLGQSIKGLSVGIPKEYRVDGMPGEIDELWSRGIEWLKAAGATVKEVSLPHTKYALPTYYIVAPAECSSNLARYDGVRYGLRVDGRDITDMYEKTRAAGFGAEVRRRVLMGTYVLSAGYYDAYYLKAQKVRSLIAQDFASAFSEVDVLLTPTAPSAAFAIGEKSDDPLSMYLNDVFTVPVNLAGLPGISVPAGLSGEGLPLGLQLIGRTFDEETLLKAAYAIEQAADFKAAPEAWWKA.

Residues Lys78 and Ser158 each act as charge relay system in the active site. The active-site Acyl-ester intermediate is the Ser182.

This sequence belongs to the amidase family. GatA subfamily. In terms of assembly, heterotrimer of A, B and C subunits.

The enzyme catalyses L-glutamyl-tRNA(Gln) + L-glutamine + ATP + H2O = L-glutaminyl-tRNA(Gln) + L-glutamate + ADP + phosphate + H(+). Allows the formation of correctly charged Gln-tRNA(Gln) through the transamidation of misacylated Glu-tRNA(Gln) in organisms which lack glutaminyl-tRNA synthetase. The reaction takes place in the presence of glutamine and ATP through an activated gamma-phospho-Glu-tRNA(Gln). The chain is Glutamyl-tRNA(Gln) amidotransferase subunit A from Parvibaculum lavamentivorans (strain DS-1 / DSM 13023 / NCIMB 13966).